Consider the following 89-residue polypeptide: Putative membrane protein insertion efficiency factor (89 aa).

This sequence belongs to the UPF0161 family.

It localises to the cell inner membrane. Could be involved in insertion of integral membrane proteins into the membrane. This Petrotoga mobilis (strain DSM 10674 / SJ95) protein is Putative membrane protein insertion efficiency factor.